The chain runs to 269 residues: Centromere protein K (269 aa).

Residues 1–10 (MNQEDLDPDS) are compositionally biased toward acidic residues. Residues 1–20 (MNQEDLDPDSTTDVGDVTNT) are disordered. Coiled coils occupy residues 22–42 (EELI…QNKL) and 98–151 (QKLR…NKVE).

This sequence belongs to the CENP-K/MCM22 family. In terms of assembly, component of the CENPA-CAD complex, composed of CENPI, CENPK, CENPL, CENPO, CENPP, CENPQ, CENPR and CENPS. The CENPA-CAD complex interacts with the CENPA-NAC complex, at least composed of CENPA, CENPC, CENPH, CENPM, CENPN, CENPT and CENPU. Interacts directly with CENPH. As to expression, detected in several fetal organs with highest levels in fetal liver. In adults, it is weakly expressed in lung and placenta.

It is found in the nucleus. Its subcellular location is the chromosome. The protein resides in the centromere. The protein localises to the kinetochore. Component of the CENPA-CAD (nucleosome distal) complex, a complex recruited to centromeres which is involved in assembly of kinetochore proteins, mitotic progression and chromosome segregation. May be involved in incorporation of newly synthesized CENPA into centromeres via its interaction with the CENPA-NAC complex. Acts in coordination with KNL1 to recruit the NDC80 complex to the outer kinetochore. The polypeptide is Centromere protein K (CENPK) (Homo sapiens (Human)).